Here is a 725-residue protein sequence, read N- to C-terminus: MSKHVFFVTCPKGVEYLLADELKEFGLNLVRNAPAGVWVEGELESGYRACLWSRLANRVILNVADVDARSADELYAGVVDLDWQAHIPAGGSFRVTFLGQNEAIRNTQFGAQKVKDGIVDSIRGAGAPRPSVAPKDPDVTVSARLNRGRLSLGIDLSGHSLHMRGYRTEKGIAPLKENLAAALLLRAGWPEIAANGGDFVDLMCGSGTLVVEAALMALDIAPGRKQERFGFEKWPGHQPELWLSLRQEAERRAHEGKQGRIPTFYGFDRDGRVIATAEKNILRAGLEGIVRVEARPISEFTRKNDWSDTGLVLTNPPYGERLSERKELAALYQSLGEVVARELIGWRLGVFTGAPEFGKSLGLRSFKQYKLFNGKLPAQLLLFEVQPENARTPRDPAAPGQIMPRIANAERADMLRNRLKKNLKTIGQWARKQNIGCYRLYDADMPEYALAIDIYEGRVHVQEYLAPKSVDEKAARERLAEAMAVIPEVLEVAPEDLVCKQRQRQTGTRQYEKQAATGEYFNVHEHGCALKVNLKDYLDTGLFLDHRPVRYWIQQHARGKRFLNLFCYTGAATVHAAVGGASRSLSLDMSKTYVGWAQDNLALNSADPRKHVVEQADCLAWLADRKTANQSFDLIFMDPPTFSNSARMAGVLDIQRDHADLVRQCMARLSSDGLLIFSNNFRKFRLDEALESEFEVKEVSASTLDKDFQRNPKIHRCWHIRHQNS.

The region spanning 45 to 156 is the THUMP domain; it reads SGYRACLWSR…RGRLSLGIDL (112 aa).

This sequence belongs to the methyltransferase superfamily. RlmKL family.

Its subcellular location is the cytoplasm. It carries out the reaction guanosine(2445) in 23S rRNA + S-adenosyl-L-methionine = N(2)-methylguanosine(2445) in 23S rRNA + S-adenosyl-L-homocysteine + H(+). It catalyses the reaction guanosine(2069) in 23S rRNA + S-adenosyl-L-methionine = N(2)-methylguanosine(2069) in 23S rRNA + S-adenosyl-L-homocysteine + H(+). In terms of biological role, specifically methylates the guanine in position 2445 (m2G2445) and the guanine in position 2069 (m7G2069) of 23S rRNA. This Marinobacter nauticus (strain ATCC 700491 / DSM 11845 / VT8) (Marinobacter aquaeolei) protein is Ribosomal RNA large subunit methyltransferase K/L.